A 122-amino-acid polypeptide reads, in one-letter code: Small ribosomal subunit protein uS13 (122 aa).

A disordered region spans residues 97–122; it reads PVRGQRTHTNARTRKGPAKAIAGKKK.

Belongs to the universal ribosomal protein uS13 family. Part of the 30S ribosomal subunit. Forms a loose heterodimer with protein S19. Forms two bridges to the 50S subunit in the 70S ribosome.

Located at the top of the head of the 30S subunit, it contacts several helices of the 16S rRNA. In the 70S ribosome it contacts the 23S rRNA (bridge B1a) and protein L5 of the 50S subunit (bridge B1b), connecting the 2 subunits; these bridges are implicated in subunit movement. Contacts the tRNAs in the A and P-sites. This is Small ribosomal subunit protein uS13 from Brucella anthropi (strain ATCC 49188 / DSM 6882 / CCUG 24695 / JCM 21032 / LMG 3331 / NBRC 15819 / NCTC 12168 / Alc 37) (Ochrobactrum anthropi).